Here is a 139-residue protein sequence, read N- to C-terminus: D-ribose pyranase (139 aa).

His20 functions as the Proton donor in the catalytic mechanism. Substrate-binding positions include Asp28, His106, and 128–130 (YAN).

This sequence belongs to the RbsD / FucU family. RbsD subfamily. In terms of assembly, homodecamer.

The protein localises to the cytoplasm. The catalysed reaction is beta-D-ribopyranose = beta-D-ribofuranose. It functions in the pathway carbohydrate metabolism; D-ribose degradation; D-ribose 5-phosphate from beta-D-ribopyranose: step 1/2. Its function is as follows. Catalyzes the interconversion of beta-pyran and beta-furan forms of D-ribose. This chain is D-ribose pyranase, found in Actinobacillus pleuropneumoniae serotype 7 (strain AP76).